The following is a 723-amino-acid chain: Fatty acid oxidation complex subunit alpha (723 aa).

The tract at residues 1–189 (MIYQAETLQV…KIGLLDAVVD (189 aa)) is enoyl-CoA hydratase/isomerase. D296 serves as a coordination point for substrate. A 3-hydroxyacyl-CoA dehydrogenase region spans residues 311 to 723 (SKDTQRAAVL…FYGAQQQGSI (413 aa)). NAD(+) contacts are provided by residues M325, D344, 401–403 (VVE), K408, and S430. H451 serves as the catalytic For 3-hydroxyacyl-CoA dehydrogenase activity. N454 is an NAD(+) binding site. The substrate site is built by N501 and Y661.

It in the N-terminal section; belongs to the enoyl-CoA hydratase/isomerase family. The protein in the C-terminal section; belongs to the 3-hydroxyacyl-CoA dehydrogenase family. In terms of assembly, heterotetramer of two alpha chains (FadB) and two beta chains (FadA).

The catalysed reaction is a (3S)-3-hydroxyacyl-CoA + NAD(+) = a 3-oxoacyl-CoA + NADH + H(+). It carries out the reaction a (3S)-3-hydroxyacyl-CoA = a (2E)-enoyl-CoA + H2O. It catalyses the reaction a 4-saturated-(3S)-3-hydroxyacyl-CoA = a (3E)-enoyl-CoA + H2O. The enzyme catalyses (3S)-3-hydroxybutanoyl-CoA = (3R)-3-hydroxybutanoyl-CoA. The catalysed reaction is a (3Z)-enoyl-CoA = a 4-saturated (2E)-enoyl-CoA. It carries out the reaction a (3E)-enoyl-CoA = a 4-saturated (2E)-enoyl-CoA. It functions in the pathway lipid metabolism; fatty acid beta-oxidation. In terms of biological role, involved in the aerobic and anaerobic degradation of long-chain fatty acids via beta-oxidation cycle. Catalyzes the formation of 3-oxoacyl-CoA from enoyl-CoA via L-3-hydroxyacyl-CoA. It can also use D-3-hydroxyacyl-CoA and cis-3-enoyl-CoA as substrate. The chain is Fatty acid oxidation complex subunit alpha from Vibrio campbellii (strain ATCC BAA-1116).